Consider the following 463-residue polypeptide: DNA-binding protein K10 (463 aa).

Residues 1-13 (MVSKNQFYQNWTM) are compositionally biased toward polar residues. The disordered stretch occupies residues 1-304 (MVSKNQFYQN…RNGPGPGPMM (304 aa)). The span at 14 to 50 (QSQQQHPHQMQQQFQQQQQPNLQHRNNQSNNNNCNNN) shows a compositional bias: low complexity. A compositionally biased stretch (polar residues) spans 85 to 94 (QMMFSSSQMP). 7 repeat units span residues 87-94 (MFSSSQMP), 95-102 (SDPLYIDF), 103-110 (SSPPPGFK), 111-118 (HNQVGSPK), 119-126 (KKSMKGIK), 127-134 (QQQHPSPN), and 135-142 (QQQPPSPN). A 7 X approximate tandem repeats region spans residues 87–142 (MFSSSQMPSDPLYIDFSSPPPGFKHNQVGSPKKKSMKGIKQQQHPSPNQQQPPSPN). Low complexity predominate over residues 142–193 (NQQQHPSPNQQQHPSPNQQQHPNSNQQQHLSPNQQQGKMNNQNNNHMNQSQQ). Residues 194–214 (PFNNQMNGSDWQRHPGNNPNQ) show a composition bias toward polar residues. Composition is skewed to pro residues over residues 225–270 (GPPP…PPVP) and 282–291 (GGPPPPPPPL). Positions 397–416 (DELFAQYKGQRDKFVSLYEA) form a DNA-binding region, H-T-H motif. The interval 426 to 463 (AATVKAKDAKSDKDKNAISSQSAAPKAGSAKDATIPNP) is disordered. The segment covering 430 to 441 (KAKDAKSDKDKN) has biased composition (basic and acidic residues).

In terms of assembly, interacts (via N-terminus) with sqd; the interaction is direct and may be involved in localization of sqd to the oocyte during oogenesis.

Its subcellular location is the nucleus. Its function is as follows. May be involved in localization of sqd to the oocyte during oogenesis. The chain is DNA-binding protein K10 (fs(1)K10) from Drosophila melanogaster (Fruit fly).